We begin with the raw amino-acid sequence, 527 residues long: Phosphoenolpyruvate carboxykinase (ATP) (527 aa).

Arg-56, Tyr-191, and Lys-197 together coordinate substrate. ATP is bound by residues Lys-197, His-216, and 232 to 240; that span reads GLSGTGKTT. Residues Lys-197 and His-216 each contribute to the Mn(2+) site. Residue Asp-253 coordinates Mn(2+). ATP contacts are provided by residues Glu-281, Arg-318, 437–438, and Thr-443; that span reads RI. A substrate-binding site is contributed by Arg-318.

The protein belongs to the phosphoenolpyruvate carboxykinase (ATP) family. It depends on Mn(2+) as a cofactor.

The protein resides in the cytoplasm. The catalysed reaction is oxaloacetate + ATP = phosphoenolpyruvate + ADP + CO2. The protein operates within carbohydrate biosynthesis; gluconeogenesis. Its function is as follows. Involved in the gluconeogenesis. Catalyzes the conversion of oxaloacetate (OAA) to phosphoenolpyruvate (PEP) through direct phosphoryl transfer between the nucleoside triphosphate and OAA. The protein is Phosphoenolpyruvate carboxykinase (ATP) of Shouchella clausii (strain KSM-K16) (Alkalihalobacillus clausii).